Consider the following 119-residue polypeptide: Large ribosomal subunit protein bL19 (119 aa).

This sequence belongs to the bacterial ribosomal protein bL19 family.

Its function is as follows. This protein is located at the 30S-50S ribosomal subunit interface and may play a role in the structure and function of the aminoacyl-tRNA binding site. This chain is Large ribosomal subunit protein bL19, found in Sulfurovum sp. (strain NBC37-1).